We begin with the raw amino-acid sequence, 286 residues long: Citrullinase (286 aa).

In terms of domain architecture, CN hydrolase spans 4–258 (IKVAVVQLSF…DDILYATFDF (255 aa)). The active-site Proton acceptor is the Glu43. Lys116 is an active-site residue. The Nucleophile role is filled by Cys153.

It belongs to the carbon-nitrogen hydrolase superfamily.

The enzyme catalyses L-citrulline + H2O + 2 H(+) = L-ornithine + NH4(+) + CO2. Its function is as follows. Catalyzes the degradation of citrulline into ornithine, carbon dioxide and ammonia. Contributes to intramacrophage survival, in vivo growth and pathogenesis. The sequence is that of Citrullinase from Francisella tularensis subsp. tularensis (strain SCHU S4 / Schu 4).